A 407-amino-acid chain; its full sequence is Extracellular superoxide dismutase [Cu-Zn] 3 (407 aa).

The signal sequence occupies residues 1–19; it reads MRLLSVLVFLISVISIAKA. Residues 20 to 386 lie on the Extracellular side of the membrane; the sequence is DYQYAFCKFN…SESYNDNEPG (367 aa). N51, N205, and N224 each carry an N-linked (GlcNAc...) asparagine glycan. 2 residues coordinate Cu cation: H245 and H247. N256 carries N-linked (GlcNAc...) asparagine glycosylation. H263 contributes to the Cu cation binding site. Zn(2+) contacts are provided by H263, H271, H280, and D283. H320 lines the Cu cation pocket. Residues N321 and N364 are each glycosylated (N-linked (GlcNAc...) asparagine). Residues 387–406 form a helical membrane-spanning segment; that stretch reads SSSTVIPFFALIIFSIIFAL. L407 is a topological domain (cytoplasmic).

The protein belongs to the Cu-Zn superoxide dismutase family. It depends on Cu cation as a cofactor. Requires Zn(2+) as cofactor.

Its subcellular location is the cell membrane. It carries out the reaction 2 superoxide + 2 H(+) = H2O2 + O2. Its function is as follows. Protect the extracellular space from toxic effect of reactive oxygen intermediates by converting superoxyde radicals into hydrogen peroxyde and oxygen. The polypeptide is Extracellular superoxide dismutase [Cu-Zn] 3 (sodC) (Dictyostelium discoideum (Social amoeba)).